Consider the following 335-residue polypeptide: Tryptophan--tRNA ligase (335 aa).

ATP is bound by residues Gln-11–Thr-13 and Gly-19–Asn-20. The short motif at Pro-12–Asn-20 is the 'HIGH' region element. Asp-135 contributes to the L-tryptophan binding site. ATP is bound by residues Gly-147–Asp-149, Val-189, and Lys-198–Ser-202. Positions Lys-198–Ser-202 match the 'KMSKS' region motif.

This sequence belongs to the class-I aminoacyl-tRNA synthetase family. As to quaternary structure, homodimer.

It is found in the cytoplasm. The catalysed reaction is tRNA(Trp) + L-tryptophan + ATP = L-tryptophyl-tRNA(Trp) + AMP + diphosphate + H(+). Its function is as follows. Catalyzes the attachment of tryptophan to tRNA(Trp). The polypeptide is Tryptophan--tRNA ligase (Nostoc sp. (strain PCC 7120 / SAG 25.82 / UTEX 2576)).